The primary structure comprises 487 residues: uncharacterized protein (487 aa).

ABC transporter domains are found at residues 5–249 (VKFA…IPVK) and 265–487 (ISME…VIHA). 297–304 (GSNGSGKT) provides a ligand contact to ATP.

This sequence belongs to the ABC transporter superfamily.

It is found in the mitochondrion. This is an uncharacterized protein from Schizosaccharomyces pombe (strain 972 / ATCC 24843) (Fission yeast).